The primary structure comprises 440 residues: Tol-Pal system protein TolB (440 aa).

The first 21 residues, 1 to 21 (MKIFGKWLLVTLLICSMPVKA), serve as a signal peptide directing secretion.

The protein belongs to the TolB family. The Tol-Pal system is composed of five core proteins: the inner membrane proteins TolA, TolQ and TolR, the periplasmic protein TolB and the outer membrane protein Pal. They form a network linking the inner and outer membranes and the peptidoglycan layer.

The protein localises to the periplasm. Functionally, part of the Tol-Pal system, which plays a role in outer membrane invagination during cell division and is important for maintaining outer membrane integrity. The chain is Tol-Pal system protein TolB from Shewanella halifaxensis (strain HAW-EB4).